A 186-amino-acid polypeptide reads, in one-letter code: ADP-ribosylation factor-like protein 8B (186 aa).

The segment at residues M1–E19 is an intramembrane region (note=Mediates targeting to membranes). GTP is bound by residues Q29 to T35, D71 to Q75, and N130 to D133. A Glycyl lysine isopeptide (Lys-Gly) (interchain with G-Cter in ubiquitin) cross-link involves residue K141.

This sequence belongs to the small GTPase superfamily. Arf family. As to quaternary structure, interacts with tubulin. Interacts with BORCS5; recruits ARL8B to lysosomes. Interacts with VPS41; the interaction mediates the recruitment of the HOPS complex to lysosomes. Interacts (GTP-bound form) with PLEKHM2 (via RUN domain); the interaction is required to recruit the motor protein kinesin-1 on lysosomes. Interacts (GTP-bound form) with PLEKHM1 (via RUN domain); the interaction is required for PLEKHM1 localization to lysosomes and for ARL8B function in delivery and degradation of endocytic and autophagic cargo in lysosomes. PLEKHM1 and PLEKHM2 compete for interaction with ARL8B. Interacts (GTP-bound form) with RUFY1; the interaction is required for RUFY1 endosomal location. When GTP-bound, interacts with RUFY3 and RUFY4, but not with RUFY1, nor RUFY2. In terms of processing, ubiquitinated at Lys-141 by RNF167, leading to its degradation.

The protein localises to the late endosome membrane. Its subcellular location is the lysosome membrane. The protein resides in the cytoplasm. It localises to the cytoskeleton. It is found in the spindle. The protein localises to the cell projection. Its subcellular location is the axon. The protein resides in the synapse. It localises to the cytolytic granule membrane. It is found in the early endosome membrane. It carries out the reaction GTP + H2O = GDP + phosphate + H(+). Small GTPase which cycles between active GTP-bound and inactive GDP-bound states. In its active state, binds to a variety of effector proteins playing a key role in the regulation of lysosomal positioning which is important for nutrient sensing, natural killer cell-mediated cytotoxicity and antigen presentation. Along with its effectors, orchestrates lysosomal transport and fusion. Localizes specifically to lysosomal membranes and mediates anterograde lysosomal motility by recruiting PLEKHM2, which in turn recruits the motor protein kinesin-1 on lysosomes. Required for lysosomal and cytolytic granule exocytosis. Critical factor involved in NK cell-mediated cytotoxicity. Drives the polarization of cytolytic granules and microtubule-organizing centers (MTOCs) toward the immune synapse between effector NK lymphocytes and target cells. In neurons, mediates the anterograde axonal long-range transport of presynaptic lysosome-related vesicles required for presynaptic biogenesis and synaptic function. Also acts as a regulator of endosome to lysosome trafficking pathways of special significance for host defense. Recruits RUFY1 onto early endosomes regulating endosomes to trans-Golgi network proteins retrieval. Regulates cargo trafficking to lysosomes by binding to PLEKHM1 and recruiting the HOPS subunit VPS41, resulting in functional assembly of the HOPS complex on lysosomal membranes. Plays an important role in cargo delivery to lysosomes for antigen presentation and microbial killing. Directs the intersection of CD1d with lipid antigens in lysosomes, and plays a role in intersecting phagosomes with lysosomes to generate phagolysosomes that kill microbes. Involved in the process of MHC II presentation. Regulates the delivery of antigens to lysosomes and the formation of MHC II-peptide complexes through the recruitment of the HOPS complex to lysosomes allowing the fusion of late endosomes to lysosomes. May play a role in chromosome segregation. In Macaca fascicularis (Crab-eating macaque), this protein is ADP-ribosylation factor-like protein 8B (ARL8B).